The sequence spans 407 residues: Proteasomal ubiquitin receptor ADRM1 (407 aa).

Thr-2 is subject to N-acetylthreonine. Ser-15 is modified (phosphoserine). A Pru domain is found at 18-131; that stretch reads ASNKYLVEFR…RKVNEYLNNP (114 aa). Lys-34 is covalently cross-linked (Glycyl lysine isopeptide (Lys-Gly) (interchain with G-Cter in ubiquitin)). At Tyr-127 the chain carries Phosphotyrosine. A phosphoserine mark is found at Ser-140 and Ser-211. 2 disordered regions span residues 194–259 and 379–407; these read LLGS…ASPT and KAMQ…MSLD. Thr-217 is subject to Phosphothreonine. Residues 253–407 form an interaction with UCHL5 region; that stretch reads STAASPTQPI…KDEEEDMSLD (155 aa). The region spanning 277–391 is the DEUBAD domain; it reads PAGPAGGQQV…QNNAKPEQKE (115 aa). Over residues 387–398 the composition is skewed to basic and acidic residues; that stretch reads PEQKEGDTKDKK. Position 405 is a phosphoserine (Ser-405).

The protein belongs to the ADRM1 family. As to quaternary structure, component of the 19S proteasome regulatory particle complex. The 26S proteasome consists of a 20S core particle (CP) and two 19S regulatory subunits (RP). Interacts with the proteasomal scaffolding protein PSMD1. Interacts with deubiquitinase UCHL5; this interaction activates the auto-inhibited UCHL5 by deoligomerizing it. Interacts with UBQLN2 and ubiquitin. Ubiquitinated by UBE3C in response to proteotoxic stress.

It localises to the cytoplasm. It is found in the nucleus. Functionally, component of the 26S proteasome, a multiprotein complex involved in the ATP-dependent degradation of ubiquitinated proteins. This complex plays a key role in the maintenance of protein homeostasis by removing misfolded or damaged proteins, which could impair cellular functions, and by removing proteins whose functions are no longer required. Therefore, the proteasome participates in numerous cellular processes, including cell cycle progression, apoptosis, or DNA damage repair. Within the complex, functions as a proteasomal ubiquitin receptor. Engages and activates 19S-associated deubiquitinases UCHL5 and PSMD14 during protein degradation. UCHL5 reversibly associate with the 19S regulatory particle whereas PSMD14 is an intrinsic subunit of the proteasome lid subcomplex. In Homo sapiens (Human), this protein is Proteasomal ubiquitin receptor ADRM1 (ADRM1).